The primary structure comprises 574 residues: Frizzled-7 (574 aa).

The signal sequence occupies residues 1–32; it reads MRDPGAAAPLSSLGLCALVLALLGALSAGAGA. At 33 to 256 the chain is on the extracellular side; it reads QPYHGEKGIS…EEERRFARLW (224 aa). The 120-residue stretch at 44–163 folds into the FZ domain; it reads PDHGFCQPIS…HGAGEICVGQ (120 aa). Intrachain disulfides connect Cys-49/Cys-110, Cys-57/Cys-103, Cys-94/Cys-131, Cys-120/Cys-160, and Cys-124/Cys-148. Asn-63 carries an N-linked (GlcNAc...) asparagine glycan. Asn-164 carries N-linked (GlcNAc...) asparagine glycosylation. Residues 257 to 277 traverse the membrane as a helical segment; sequence VGVWSVLCCASTLFTVLTYLV. Residues 278-288 are Cytoplasmic-facing; that stretch reads DMRRFSYPERP. The helical transmembrane segment at 289 to 309 threads the bilayer; it reads IIFLSGCYFMVAVAHVAGFLL. Residues 310-336 are Extracellular-facing; that stretch reads EDRAVCVERFSDDGYRTVAQGTKKEGC. The helical transmembrane segment at 337–357 threads the bilayer; sequence TILFMVLYFFGMASSIWWVIL. Residues 358–379 are Cytoplasmic-facing; it reads SLTWFLAAGMKWGHEAIEANSQ. A helical transmembrane segment spans residues 380–400; it reads YFHLAAWAVPAVKTITILAMG. The Extracellular portion of the chain corresponds to 401 to 423; sequence QVDGDLLSGVCYVGLSSVDALRG. Residues 424 to 444 traverse the membrane as a helical segment; that stretch reads FVLAPLFVYLFIGTSFLLAGF. The Cytoplasmic portion of the chain corresponds to 445-470; sequence VSLFRIRTIMKHDGTKTEKLEKLMVR. Residues 471–491 form a helical membrane-spanning segment; the sequence is IGVFSVLYTVPATIVLACYFY. The Extracellular segment spans residues 492 to 528; the sequence is EQAFREHWERTWLLQTCKSYAVPCPPGHFPPMSPDFT. The chain crosses the membrane as a helical span at residues 529-549; it reads VFMIKYLMTMIVGITTGFWIW. At 550–574 the chain is on the cytoplasmic side; it reads SGKTLQSWRRFYHRLSHSSKGETAV. Positions 552–557 match the Lys-Thr-X-X-X-Trp motif, mediates interaction with the PDZ domain of Dvl family members motif; the sequence is KTLQSW. The PDZ-binding signature appears at 572-574; it reads TAV.

The protein belongs to the G-protein coupled receptor Fz/Smo family. As to quaternary structure, interacts with MAGI3. Interacts with DVL1. Interacts with CCDC88C/DAPLE; the interaction displaces DVL1 from FZD7, leading to inhibition of canonical Wnt signaling and triggering of non-canonical Wnt responses. Interacts with MYOC. Binds to SDCBP; this interaction is increased by inositol trisphosphate (IP3). Interacts with glypican GPC3. (Microbial infection) Interacts with C.difficile toxin TcdB; frizzled receptors constitute the major host receptors for TcdB in the colonic epithelium. Ubiquitinated by ZNRF3, leading to its degradation by the proteasome. High expression in adult skeletal muscle and fetal kidney, followed by fetal lung, adult heart, brain, and placenta. Specifically expressed in squamous cell esophageal carcinomas.

It localises to the cell membrane. Its subcellular location is the endosome membrane. Its function is as follows. Receptor for Wnt proteins. Most frizzled receptors are coupled to the beta-catenin canonical signaling pathway, which leads to the activation of disheveled proteins, inhibition of GSK-3 kinase, nuclear accumulation of beta-catenin and activation of Wnt target genes. A second signaling pathway involving PKC and calcium fluxes has been seen for some family members, but it is not yet clear if it represents a distinct pathway or if it can be integrated in the canonical pathway, as PKC seems to be required for Wnt-mediated inactivation of GSK-3 kinase. Both pathways seem to involve interactions with G-proteins. Activation by WNT8 induces expression of beta-catenin target genes. Following ligand activation, binds to CCDC88C/DAPLE which displaces DVL1 from FZD7 and leads to inhibition of canonical Wnt signaling, activation of G-proteins by CCDC88C and triggering of non-canonical Wnt responses. May be involved in transduction and intercellular transmission of polarity information during tissue morphogenesis and/or in differentiated tissues. In terms of biological role, (Microbial infection) Acts as a receptor for C.difficile toxin TcdB in the colonic epithelium. This chain is Frizzled-7 (FZD7), found in Homo sapiens (Human).